Here is a 749-residue protein sequence, read N- to C-terminus: Chaperone protein DnaK 1 (749 aa).

Thr198 carries the phosphothreonine; by autocatalysis modification. 3 stretches are compositionally biased toward basic and acidic residues: residues 643–653, 661–694, and 711–724; these read RWDADPWDRSR, YDDR…RDRN, and PTWE…RDRS. Residues 643 to 749 form a disordered region; the sequence is RWDADPWDRS…GWDDDDDEWF (107 aa). Positions 740–749 are enriched in acidic residues; sequence GWDDDDDEWF.

This sequence belongs to the heat shock protein 70 family.

Functionally, acts as a chaperone. This Synechococcus sp. (strain ATCC 27144 / PCC 6301 / SAUG 1402/1) (Anacystis nidulans) protein is Chaperone protein DnaK 1.